A 287-amino-acid chain; its full sequence is Acetylglutamate kinase (287 aa).

Residues 64-65 (GG), R86, and N181 each bind substrate.

Belongs to the acetylglutamate kinase family. ArgB subfamily.

It is found in the cytoplasm. The enzyme catalyses N-acetyl-L-glutamate + ATP = N-acetyl-L-glutamyl 5-phosphate + ADP. Its pathway is amino-acid biosynthesis; L-arginine biosynthesis; N(2)-acetyl-L-ornithine from L-glutamate: step 2/4. Its function is as follows. Catalyzes the ATP-dependent phosphorylation of N-acetyl-L-glutamate. The protein is Acetylglutamate kinase of Desulforamulus reducens (strain ATCC BAA-1160 / DSM 100696 / MI-1) (Desulfotomaculum reducens).